We begin with the raw amino-acid sequence, 126 residues long: Urease subunit beta (126 aa).

Belongs to the urease beta subunit family. Heterotrimer of UreA (gamma), UreB (beta) and UreC (alpha) subunits. Three heterotrimers associate to form the active enzyme.

The protein resides in the cytoplasm. It catalyses the reaction urea + 2 H2O + H(+) = hydrogencarbonate + 2 NH4(+). Its pathway is nitrogen metabolism; urea degradation; CO(2) and NH(3) from urea (urease route): step 1/1. In Haloquadratum walsbyi (strain DSM 16790 / HBSQ001), this protein is Urease subunit beta.